The chain runs to 883 residues: DNA double-strand break repair Rad50 ATPase (883 aa).

Residues Lys12, Asn32 to Ser38, and Gln137 each bind ATP. Residues Glu244–Asp283 are a coiled coil. Disordered stretches follow at residues Glu271–Asp290 and Asp305–Val326. Basic and acidic residues predominate over residues Ser313–Val326. Coiled coils occupy residues Ala336 to Leu389 and Leu414 to Gly452. In terms of domain architecture, Zinc-hook spans Phe407–Ala506. The Zn(2+) site is built by Cys454 and Cys457. The segment at Glu508–Asp565 is disordered. Coiled-coil stretches lie at residues Arg571–Ala604 and Lys668–Leu720.

The protein belongs to the SMC family. RAD50 subfamily. In terms of assembly, homodimer. Forms a heterotetramer composed of two Mre11 subunits and two Rad50 subunits. It depends on Zn(2+) as a cofactor.

Its function is as follows. Part of the Rad50/Mre11 complex, which is involved in the early steps of DNA double-strand break (DSB) repair. Rad50 controls the balance between DNA end bridging and DNA resection via ATP-dependent structural rearrangements of the Rad50/Mre11 complex. The polypeptide is DNA double-strand break repair Rad50 ATPase (Halobacterium salinarum (strain ATCC 700922 / JCM 11081 / NRC-1) (Halobacterium halobium)).